The sequence spans 241 residues: MEKPRGVRCTNGFPERELPRPGASRPAEKSRPPEAKGAQPADAWKAGRPRSEEDNELNLPNLAAAYSSILRSLGEDPQRQGLLKTPWRAATAMQFFTKGYQETISDVLNDAIFDEDHDEMVIVKDIDMFSMCEHHLVPFVGRVHIGYLPNKQVLGLSKLARIVEIYSRRLQVQERLTKQIAVAITEALQPAGVGVVIEATHMCMVMRGVQKMNSKTVTSTMLGVFREDPKTREEFLTLIRS.

Residues 1–11 constitute a propeptide that is removed on maturation; the sequence is MEKPRGVRCTN. The segment at 1-58 is disordered; it reads MEKPRGVRCTNGFPERELPRPGASRPAEKSRPPEAKGAQPADAWKAGRPRSEEDNELN. Ser51 and Ser72 each carry phosphoserine. Residues Cys132, His135, and Cys203 each coordinate Zn(2+).

This sequence belongs to the GTP cyclohydrolase I family. As to quaternary structure, toroid-shaped homodecamer, composed of two pentamers of five dimers. Interacts with AHSA1 and GCHFR/GFRP. Post-translationally, phosphorylated.

It localises to the cytoplasm. It is found in the nucleus. The catalysed reaction is GTP + H2O = 7,8-dihydroneopterin 3'-triphosphate + formate + H(+). It functions in the pathway cofactor biosynthesis; 7,8-dihydroneopterin triphosphate biosynthesis; 7,8-dihydroneopterin triphosphate from GTP: step 1/1. With respect to regulation, GTP shows a positive allosteric effect, and tetrahydrobiopterin inhibits the enzyme activity. Zinc is required for catalytic activity. Inhibited by Mg(2+). Its function is as follows. May positively regulate nitric oxide synthesis in endothelial cells. May be involved in dopamine synthesis. May modify pain sensitivity and persistence. The protein is GTP cyclohydrolase 1 (Gch1) of Rattus norvegicus (Rat).